The primary structure comprises 172 residues: Co-chaperone protein HscB homolog (172 aa).

Residues 2–74 (NYFELFGLVE…LRRAEYLLSL (73 aa)) enclose the J domain.

This sequence belongs to the HscB family. Interacts with HscA and stimulates its ATPase activity.

Functionally, co-chaperone involved in the maturation of iron-sulfur cluster-containing proteins. Seems to help targeting proteins to be folded toward HscA. In Aeromonas hydrophila subsp. hydrophila (strain ATCC 7966 / DSM 30187 / BCRC 13018 / CCUG 14551 / JCM 1027 / KCTC 2358 / NCIMB 9240 / NCTC 8049), this protein is Co-chaperone protein HscB homolog.